A 356-amino-acid chain; its full sequence is Neurogenic differentiation factor 1 (356 aa).

The tract at residues 1–94 (MTKSYSESGL…GPKKKKMTKA (94 aa)) is disordered. The span at 58–78 (EEEDEDEDLEEEEEEEEEDDD) shows a compositional bias: acidic residues. Positions 81-93 (PKRRGPKKKKMTK) are enriched in basic residues. Residues 87 to 93 (KKKKMTK) carry the Nuclear localization signal motif. The bHLH domain occupies 101 to 153 (LRRMKANARERNRMHGLNAALDNLRKVVPCYSKTQKLSKIETLRLAKNYIWAL). Phosphoserine is present on residues S162, S259, S266, and S274. The residue at position 335 (S335) is a Phosphoserine; by CaMK2.

In terms of assembly, efficient DNA-binding requires dimerization with another bHLH protein. Heterodimer with TCF3/E47; the heterodimer is inhibited in presence of ID2, but not NR0B2, to E-box element. Interacts with EP300; the interaction is inhibited by NR0B2. Interacts with RREB1. Interacts with ATOH8. In terms of processing, phosphorylated. In islet cells, phosphorylated on Ser-274 upon glucose stimulation; which may be required for nuclear localization. In activated neurons, phosphorylated on Ser-335; which promotes dendritic growth. Phosphorylated by MAPK1; phosphorylation regulates heterodimerization and DNA-binding activities. Phosphorylation on Ser-266 and Ser-274 increases transactivation on the insulin promoter in glucose-stimulated insulinoma cells.

The protein resides in the cytoplasm. It is found in the nucleus. Acts as a transcriptional activator: mediates transcriptional activation by binding to E box-containing promoter consensus core sequences 5'-CANNTG-3'. Associates with the p300/CBP transcription coactivator complex to stimulate transcription of the secretin gene as well as the gene encoding the cyclin-dependent kinase inhibitor CDKN1A. Contributes to the regulation of several cell differentiation pathways, like those that promote the formation of early retinal ganglion cells, inner ear sensory neurons, granule cells forming either the cerebellum or the dentate gyrus cell layer of the hippocampus, endocrine islet cells of the pancreas and enteroendocrine cells of the small intestine. Together with PAX6 or SIX3, is required for the regulation of amacrine cell fate specification. Also required for dendrite morphogenesis and maintenance in the cerebellar cortex. Associates with chromatin to enhancer regulatory elements in genes encoding key transcriptional regulators of neurogenesis. This is Neurogenic differentiation factor 1 (NEUROD1) from Homo sapiens (Human).